Here is a 104-residue protein sequence, read N- to C-terminus: Large ribosomal subunit protein uL24 (104 aa).

It belongs to the universal ribosomal protein uL24 family. Part of the 50S ribosomal subunit.

In terms of biological role, one of two assembly initiator proteins, it binds directly to the 5'-end of the 23S rRNA, where it nucleates assembly of the 50S subunit. One of the proteins that surrounds the polypeptide exit tunnel on the outside of the subunit. This Baumannia cicadellinicola subsp. Homalodisca coagulata protein is Large ribosomal subunit protein uL24.